The sequence spans 398 residues: Phosphoglycerate kinase (398 aa).

Residues 23 to 25 (DFN), Arg38, 61 to 64 (HLGK), Arg122, and Arg155 contribute to the substrate site. Residues Lys206, Gly297, Glu328, and 354 to 357 (GGDS) contribute to the ATP site.

This sequence belongs to the phosphoglycerate kinase family. Monomer.

Its subcellular location is the cytoplasm. The enzyme catalyses (2R)-3-phosphoglycerate + ATP = (2R)-3-phospho-glyceroyl phosphate + ADP. Its pathway is carbohydrate degradation; glycolysis; pyruvate from D-glyceraldehyde 3-phosphate: step 2/5. The protein is Phosphoglycerate kinase of Clostridium novyi (strain NT).